A 517-amino-acid polypeptide reads, in one-letter code: Nicotine N-demethylase CYP82E4 (517 aa).

A helical membrane pass occupies residues 2–22 (VFPIEAIVGLVTFTFLFFFLW). Lys254 participates in a covalent cross-link: Glycyl lysine isopeptide (Lys-Gly) (interchain with G-Cter in ubiquitin). Cys457 is a binding site for heme.

This sequence belongs to the cytochrome P450 family. CYP82E2 subfamily. The cofactor is heme. Expressed at low levels in green leaves.

The protein localises to the membrane. The enzyme catalyses (S)-nicotine + reduced [NADPH--hemoprotein reductase] + O2 = (S)-nornicotine + formaldehyde + oxidized [NADPH--hemoprotein reductase] + H2O + H(+). The protein operates within alkaloid biosynthesis; nicotine biosynthesis. Involved in the biosynthesis of pyridine alkaloid natural products, leading mainly to the production of anabasine, anatabine, nicotine and nornicotine, effective deterrents against herbivores with antiparasitic and pesticide properties (neurotoxins); nornicotine serves as the precursor in the synthesis of the carcinogen compound N'-nitrosonornicotine (NNN). Catalyzes the demethylation of nicotine to form nornicotine. This is Nicotine N-demethylase CYP82E4 from Nicotiana tabacum (Common tobacco).